A 589-amino-acid chain; its full sequence is Sphingosine-1-phosphate lyase (589 aa).

At 1–58 the chain is on the lumenal side; that stretch reads MSGVSNKTVSINGWYGMPIHLLREEGDFAQFMILTINELKIAIHGYLRNTPWYNMLKD. The N-linked (GlcNAc...) asparagine glycan is linked to N6. The helical transmembrane segment at 59–76 threads the bilayer; it reads YLFVIFCYKLISNFFYLL. The Cytoplasmic portion of the chain corresponds to 77-589; sequence KVYGPVRLAV…LGPGEDTATK (513 aa). The residue at position 380 (K380) is an N6-(pyridoxal phosphate)lysine.

It belongs to the group II decarboxylase family. Sphingosine-1-phosphate lyase subfamily. Homodimer. Pyridoxal 5'-phosphate serves as cofactor. Glycosylated.

It is found in the endoplasmic reticulum membrane. The enzyme catalyses sphinganine 1-phosphate = hexadecanal + phosphoethanolamine. It carries out the reaction (4R)-hydroxysphinganine 1-phosphate = (2R)-hydroxyhexadecanal + phosphoethanolamine. It participates in lipid metabolism; sphingolipid metabolism. Its function is as follows. Sphingosine-1-phosphate lyase that cleaves phosphorylated sphingoid bases (PSBs), such as sphingosine-1-phosphate, into fatty aldehydes and phosphoethanolamine. Prefers C-16 dihydrosphingosine-l-phosphate (DHS-P) as a substrate. Regulates intracellular levels of sphingolipid long-chain base phosphates (LCBPs). Plays a role in the regulation of global responses to nutrient deprivation in yeast. The sequence is that of Sphingosine-1-phosphate lyase from Saccharomyces cerevisiae (strain ATCC 204508 / S288c) (Baker's yeast).